The following is a 1033-amino-acid chain: Putative U-box domain-containing protein 42 (1033 aa).

Positions 145 to 226 (SQSQMTDIPD…SSNASSQRKY (82 aa)) are disordered. A compositionally biased stretch (polar residues) spans 200–226 (LSKSQSQSTEIPDIPSQSSNASSQRKY). The region spanning 245–322 (PPYQAFICPL…QEWKVRNEAA (78 aa)) is the U-box domain. ARM repeat units lie at residues 483–522 (PENIKQMAESGLLEPLLGHLAEGSEETQVAMAAYLVEIDI), 523–562 (GHEKKTYVAEKACPALIGLVQSENIDARRAAFKALAHISL), 564–608 (HPNN…NILE), 610–659 (GLEH…SLSK), and 665–704 (ATIVSVIKETDASFAMIELINNPHDELGVGALKLLIALTP).

It carries out the reaction S-ubiquitinyl-[E2 ubiquitin-conjugating enzyme]-L-cysteine + [acceptor protein]-L-lysine = [E2 ubiquitin-conjugating enzyme]-L-cysteine + N(6)-ubiquitinyl-[acceptor protein]-L-lysine.. The protein operates within protein modification; protein ubiquitination. Functions as an E3 ubiquitin ligase. This is Putative U-box domain-containing protein 42 (PUB42) from Arabidopsis thaliana (Mouse-ear cress).